Here is a 134-residue protein sequence, read N- to C-terminus: Replication enhancer protein (134 aa).

Belongs to the geminiviridae replication enhancer protein family. As to quaternary structure, homooligomer. Interacts with the replication-associated protein (REP). Interacts with host proliferating cell nuclear antigen (PCNA). Interacts with host retinoblastoma-related protein 1 (RBR1), and may thereby deregulate the host cell cycle. Oligomerization and interaction with PCNA are necessary for optimal replication enhancement.

In terms of biological role, increases viral DNA accumulation. Enhances infectivity and symptom expression. In Tomato yellow leaf curl Sardinia virus (TYLCSV), this protein is Replication enhancer protein.